Here is a 188-residue protein sequence, read N- to C-terminus: Accessory gene regulator protein B (188 aa).

The next 4 membrane-spanning stretches (helical) occupy residues 49–69 (LALLLNIFLYTLIVHLTFLTL), 104–126 (ISFQFLLILSLLSALIVIKYAPA), 143–163 (IKSIIVFVLLMTIACIVPPPY), and 166–186 (FVVYGVLLQSFTLLPIFSIKE).

This sequence belongs to the AgrB family.

It localises to the cell membrane. Essential for the production of a quorum sensing system signal molecule, the autoinducing peptide (AIP). This quorum sensing system is responsible for the regulation of the expression of virulence factor genes. Involved in the proteolytic processing of AgrD, the precursor of AIP. The polypeptide is Accessory gene regulator protein B (Staphylococcus intermedius).